The following is a 340-amino-acid chain: Cysteinyl leukotriene receptor 1 (340 aa).

At 1–31 (MDETGNPTIPPASNNTCYDSIDDFRNQVYST) the chain is on the extracellular side. The N-linked (GlcNAc...) asparagine glycan is linked to N14. A helical transmembrane segment spans residues 32 to 52 (LYSMISVVGFFGNGFVLYVLV). Over 53 to 60 (KTYHEKSA) the chain is Cytoplasmic. Residues 61-81 (FQVYMINLAVADLLCVCTLPL) form a helical membrane-spanning segment. Over 82–109 (RVAYYVHKGIWLFGDFLCRLSTYALYVN) the chain is Extracellular. A disulfide bond links C99 and C176. A helical membrane pass occupies residues 110–130 (LYCSIFFMTAMSFFRCVAIVF). Residues 131–144 (PVQNISLVTQKKAR) are Cytoplasmic-facing. The chain crosses the membrane as a helical span at residues 145-165 (LVCIAIWMFVILTSSPFLMAN). The Extracellular segment spans residues 166–196 (TYKDEKNNTKCFEPPQDNQAKNYVLILHYVS). A glycan (N-linked (GlcNAc...) asparagine) is linked at N172. A helical membrane pass occupies residues 197–217 (LFIGFIIPFITIIVCYTMIIF). Over 218 to 233 (TLLKSSMKKNLSSRKR) the chain is Cytoplasmic. Residues 234–254 (AIGMIIVVTAAFLVSFMPYHI) traverse the membrane as a helical segment. Over 255-279 (QRTIHLHFLHNKTKPCDSILRMQKS) the chain is Extracellular. The N-linked (GlcNAc...) asparagine glycan is linked to N265. The helical transmembrane segment at 280 to 300 (VVITLSLAASNCCFDPLLYFF) threads the bilayer. Over 301 to 340 (SGGNFRRRLSTIRKYSLSSMTYIPKKKTSLPQKGKDICKE) the chain is Cytoplasmic.

Belongs to the G-protein coupled receptor 1 family.

The protein resides in the cell membrane. Functionally, receptor for cysteinyl leukotrienes mediating bronchoconstriction of individuals with and without asthma. Stimulation by LTD4 results in the contraction and proliferation of smooth muscle, edema, eosinophil migration and damage to the mucus layer in the lung. This response is mediated via a G-protein that activates a phosphatidylinositol-calcium second messenger system. The chain is Cysteinyl leukotriene receptor 1 (CYSLTR1) from Cavia porcellus (Guinea pig).